The chain runs to 275 residues: Tryptophan synthase alpha chain (275 aa).

Active-site proton acceptor residues include glutamate 58 and aspartate 69.

The protein belongs to the TrpA family. Tetramer of two alpha and two beta chains. As to expression, ubiquitously expressed at low levels in seedlings, roots, hypocotyls, cotyledons, stems, leaves, inflorescences, flowers, siliques and seeds.

It localises to the cytoplasm. It catalyses the reaction (1S,2R)-1-C-(indol-3-yl)glycerol 3-phosphate + L-serine = D-glyceraldehyde 3-phosphate + L-tryptophan + H2O. The enzyme catalyses (1S,2R)-1-C-(indol-3-yl)glycerol 3-phosphate = indole + D-glyceraldehyde 3-phosphate. The protein operates within amino-acid biosynthesis; L-tryptophan biosynthesis; L-tryptophan from chorismate: step 5/5. Its function is as follows. The alpha subunit is responsible for the aldol cleavage of indoleglycerol phosphate to indole and glyceraldehyde 3-phosphate. Contributes to the tryptophan-independent indole biosynthesis, and possibly to auxin production. The protein is Tryptophan synthase alpha chain (TRPA1) of Arabidopsis thaliana (Mouse-ear cress).